The chain runs to 609 residues: MKWVVSILLIFLLNSTESRTMHSNAYGIASALDSFQCSPEMNLVDLATIFFAQFVQEATYKEVSKMVKDVLTVTEKSTGSEQPTGCSENRLSAFLEEICHEEEIPEKYGLSGCCSQNEEERHNCLLARKKDSPASIPPFQVPEPVTSCKAYEENREMFLNRYLYEIARRHPFLYSSTALYLASHYDKIISACCKSENAVECFQSKAATITKELRETSLLNQHVCAVIRNFGPRTLQAITVTTLSQRYSKANFTEIQKLVLDVAHAHEECCRGNVEECVQDGEKLISYVCSQEDILSSSIVECCKLPTVELAQCIIHAENDDKPEGLSPNLNRLLGERDFNQFSSKEKDLFMARFTYEYSRRHTKLAVPVILRVAKGYQEFLEKCSQSENPLECQDKGEEELQKYIQEGQALAKRSCGLFQKLGDYYLQNAFLVAYTKKAPQLTPPELIALTRKMATAAATCCQLSEDKQLACGEQVAGLIIGQLCIRHEESPINPGVGQCCTSSYANRRPCFSSLVVDETYVPPPFSDDKFIFHKDLCQAQGVALQTMKQQFLINLVKQKPQITEEQLEAVIADFSGLLEKCCQGQGQEVCFSEEGPQLISKTRAALGV.

The N-terminal stretch at 1–18 (MKWVVSILLIFLLNSTES) is a signal peptide. Albumin domains lie at 19–210 (RTMH…ATIT), 211–402 (KELR…EELQ), and 403–601 (KYIQ…QLIS). H22 lines the Cu(2+) pocket. Intrachain disulfides connect C99-C114, C113-C124, C148-C193, C192-C201, C224-C270, C269-C277, C289-C303, and C302-C313. Phosphoserine is present on residues S111 and S115. N251 carries N-linked (GlcNAc...) asparagine glycosylation. Position 344 is a phosphoserine (S344). 7 cysteine pairs are disulfide-bonded: C384–C393, C416–C462, C461–C472, C485–C501, C500–C511, C538–C583, and C582–C591.

Belongs to the ALB/AFP/VDB family. Dimeric and trimeric forms have been found in addition to the monomeric form. In terms of processing, sulfated. Plasma.

Its subcellular location is the secreted. Functionally, binds copper, nickel, and fatty acids as well as, and bilirubin less well than, serum albumin. This Equus caballus (Horse) protein is Alpha-fetoprotein (AFP).